Here is a 431-residue protein sequence, read N- to C-terminus: Na(+)/H(+) antiporter NhaA (431 aa).

11 consecutive transmembrane segments (helical) span residues 33–53 (VGGA…NSPW), 74–94 (LSIS…VVGV), 112–132 (ALPI…FVGV), 144–164 (GWAI…AVIA), 173–193 (IFLL…IAVF), 197–217 (QLSF…GLAV), 225–245 (FLLL…GVHA), 279–299 (FAVP…LSGF), 311–331 (VIAG…YVLA), 347–367 (VLGL…IGEL), and 379–399 (AKIA…VVLL).

This sequence belongs to the NhaA Na(+)/H(+) (TC 2.A.33) antiporter family.

The protein localises to the cell membrane. It catalyses the reaction Na(+)(in) + 2 H(+)(out) = Na(+)(out) + 2 H(+)(in). In terms of biological role, na(+)/H(+) antiporter that extrudes sodium in exchange for external protons. This chain is Na(+)/H(+) antiporter NhaA, found in Mycolicibacterium smegmatis (strain ATCC 700084 / mc(2)155) (Mycobacterium smegmatis).